The sequence spans 107 residues: Ferredoxin Fdx8 (107 aa).

4Fe-4S ferredoxin-type domains are found at residues 1–31 and 50–79; these read MAYVIAEPCVATCDTACVPVCPVDCIHGPLA and LQLYIDPESCICCGACENECPVGAIFDEDE. [4Fe-4S] cluster is bound by residues Cys-9, Cys-13, Cys-17, Cys-21, Cys-59, Cys-62, Cys-65, and Cys-69.

[4Fe-4S] cluster is required as a cofactor.

Functionally, ferredoxins are iron-sulfur proteins that transfer electrons in a wide variety of metabolic reactions. Fdx2 can receive electrons from both FdR_A and FdR_B ferredoxin reductases, with a preference for FdR_B compared with FdR_A, and transfer the electrons to the cytochrome P450 CYP260A1. This chain is Ferredoxin Fdx8, found in Sorangium cellulosum (strain So ce56) (Polyangium cellulosum (strain So ce56)).